A 291-amino-acid polypeptide reads, in one-letter code: m-AAA protease-interacting protein 1, mitochondrial (291 aa).

Residues Met1–Tyr96 constitute a mitochondrion transit peptide.

Interacts with AFG3L2. Interacts with SPG7. Interacts with SMDT1/EMRE (via the N-terminal transit peptide); interaction is direct and takes place before maturation of SMDT1/EMRE.

It localises to the mitochondrion matrix. Functionally, promotes sorting of SMDT1/EMRE in mitochondria by ensuring its maturation. Interacts with the transit peptide region of SMDT1/EMRE precursor protein in the mitochondrial matrix, leading to protect it against protein degradation by YME1L1, thereby ensuring SMDT1/EMRE maturation by the mitochondrial processing peptidase (PMPCA and PMPCB). The polypeptide is m-AAA protease-interacting protein 1, mitochondrial (Bos taurus (Bovine)).